The following is a 160-amino-acid chain: Endoribonuclease YbeY (160 aa).

Histidine 121, histidine 125, and histidine 131 together coordinate Zn(2+).

Belongs to the endoribonuclease YbeY family. The cofactor is Zn(2+).

The protein localises to the cytoplasm. In terms of biological role, single strand-specific metallo-endoribonuclease involved in late-stage 70S ribosome quality control and in maturation of the 3' terminus of the 16S rRNA. The chain is Endoribonuclease YbeY from Hydrogenovibrio crunogenus (strain DSM 25203 / XCL-2) (Thiomicrospira crunogena).